A 594-amino-acid polypeptide reads, in one-letter code: P-granule-associated novel protein 1 (594 aa).

The first 18 residues, 1–18 (MRSLLSFVLLALARIAIS), serve as a signal peptide directing secretion. The Extracellular segment spans residues 19–513 (EETKSCIDIE…PEEEEVYRSG (495 aa)). LRR repeat units follow at residues 78-101 (GTEL…LFEN), 103-124 (FAKQ…SFQS), 125-149 (LGGS…LFTG), 150-173 (LKSL…AFEE), 175-197 (KKVE…TFDG), 198-221 (MKNL…AFRG), 222-245 (LNSL…IFSA), 246-269 (LKNL…SFPK), 271-290 (EKLV…KLKD), 291-315 (LPSL…MFGL), 318-341 (SDRI…AFQH), 343-365 (PNLI…SPSQ), 374-397 (LKKL…ELPK), 399-419 (LSSL…ALEG), and 420-442 (MEIK…TFDS). A helical transmembrane segment spans residues 514-534 (WITVAATILTIVTIVIMVIIA). At 535 to 594 (MLYFKDARYQFPLRGRRSDSDLHKLIENDPLNIASDSILVVPAMPKRNTGPKKTVRFQNF) the chain is on the cytoplasmic side.

In terms of assembly, interacts with glh-1. Interacts (via LRR regions) with myrf-1 (via C-terminus); the interaction promotes the role of myrf-1 in the synaptic remodeling of DD GABAergic motor neurons at the cell membrane. Expressed in the germline and somatic cells. In terms of tissue distribution, expressed in the germline and somatic cells. Expressed at higher levels in germline cells relative to somatic cells. As to expression, expressed in germline cells. Highly expressed in the pharynx and at lower levels in the intestine, but not detected in other tissues. Other studies suggest a broader expression pattern in somatic tissues: from embryogenesis to adult stages, expressed strongly in body wall muscle, vulva, somatic gonad and pharynx, at lower levels in the nerve ring, hypodermis, and rectal epithelia, and very weakly in the intestine.

It is found in the cytoplasm. Its subcellular location is the apical cell membrane. In terms of biological role, regulates diverse developmental processes including larval molting and gonad maturation. Promotes the localization of myrf-1 and myrf-2 to the cell membrane. In association with myrf-1, promotes the synaptic remodeling of DD GABAergic motor neurons whereby new synapses form in the dorsal processes of DD neurons. The sequence is that of P-granule-associated novel protein 1 from Caenorhabditis elegans.